The sequence spans 113 residues: Protein translation factor SUI1 homolog 1 (113 aa).

The tract at residues 1–24 is disordered; it reads MSELDSQVPTAFDPFADANAEDSG. An N-acetylserine modification is found at S2.

The protein belongs to the SUI1 family.

Functionally, probably involved in translation. In Arabidopsis thaliana (Mouse-ear cress), this protein is Protein translation factor SUI1 homolog 1.